The chain runs to 300 residues: tRNA dimethylallyltransferase (300 aa).

Position 9 to 16 (9 to 16 (GPTASGKT)) interacts with ATP. Position 11–16 (11–16 (TASGKT)) interacts with substrate. The tract at residues 34–37 (DSQQ) is interaction with substrate tRNA.

Belongs to the IPP transferase family. Monomer. The cofactor is Mg(2+).

The catalysed reaction is adenosine(37) in tRNA + dimethylallyl diphosphate = N(6)-dimethylallyladenosine(37) in tRNA + diphosphate. Catalyzes the transfer of a dimethylallyl group onto the adenine at position 37 in tRNAs that read codons beginning with uridine, leading to the formation of N6-(dimethylallyl)adenosine (i(6)A). The chain is tRNA dimethylallyltransferase from Anaeromyxobacter sp. (strain Fw109-5).